The primary structure comprises 625 residues: tRNA uridine 5-carboxymethylaminomethyl modification enzyme MnmG (625 aa).

Residues Gly-13–Gly-18, Val-125, and Ser-182 each bind FAD. NAD(+) is bound at residue Gly-276–Phe-290. FAD is bound at residue Gln-373.

It belongs to the MnmG family. In terms of assembly, homodimer. Heterotetramer of two MnmE and two MnmG subunits. FAD serves as cofactor.

It localises to the cytoplasm. In terms of biological role, NAD-binding protein involved in the addition of a carboxymethylaminomethyl (cmnm) group at the wobble position (U34) of certain tRNAs, forming tRNA-cmnm(5)s(2)U34. The polypeptide is tRNA uridine 5-carboxymethylaminomethyl modification enzyme MnmG (Lactococcus lactis subsp. cremoris (strain SK11)).